Reading from the N-terminus, the 89-residue chain is Defensin-like protein 147 (89 aa).

Residues 1–24 form the signal peptide; it reads MKKIFQLSFTVFIIFISLVLGVVG. 4 disulfide bridges follow: C34–C82, C46–C66, C51–C79, and C55–C81.

It belongs to the DEFL family. In terms of tissue distribution, expressed in flower buds, but not in stems, roots or rosette leaves.

The protein localises to the secreted. The protein is Defensin-like protein 147 (LCR1) of Arabidopsis thaliana (Mouse-ear cress).